The sequence spans 554 residues: Glucose-6-phosphate isomerase (554 aa).

The active-site Proton donor is glutamate 359. Active-site residues include histidine 390 and lysine 518.

This sequence belongs to the GPI family.

The protein resides in the cytoplasm. It carries out the reaction alpha-D-glucose 6-phosphate = beta-D-fructose 6-phosphate. Its pathway is carbohydrate biosynthesis; gluconeogenesis. It functions in the pathway carbohydrate degradation; glycolysis; D-glyceraldehyde 3-phosphate and glycerone phosphate from D-glucose: step 2/4. Functionally, catalyzes the reversible isomerization of glucose-6-phosphate to fructose-6-phosphate. The polypeptide is Glucose-6-phosphate isomerase (Pseudomonas putida (strain GB-1)).